The sequence spans 431 residues: Ribonuclease TTHA0252 (431 aa).

Zn(2+)-binding residues include His-59, His-61, Asp-63, His-64, His-141, Asp-162, and His-400.

It belongs to the metallo-beta-lactamase superfamily. RNA-metabolizing metallo-beta-lactamase-like family. Monomer. Zn(2+) is required as a cofactor.

The protein localises to the cytoplasm. Its activity is regulated as follows. Inhibited by cadmium, cobalt, manganese, magnesium, calcium and nickel ions. Has endoribonuclease activity towards 23S and 16S rRNA (in vitro). In Thermus thermophilus (strain ATCC 27634 / DSM 579 / HB8), this protein is Ribonuclease TTHA0252.